The following is a 519-amino-acid chain: Pleckstrin homology domain-containing family A member 8 (519 aa).

The 93-residue stretch at 1–93 (MEGVLYKWTN…WLVALGSAKA (93 aa)) folds into the PH domain. Thr139 carries the post-translational modification Phosphothreonine. Ser145 carries the phosphoserine modification. A Phosphothreonine modification is found at Thr153. Residues 274 to 302 (GEDNLGNHDSSLAQPASDSSSSPPESHWE) form a disordered region. Residues 282 to 298 (DSSLAQPASDSSSSPPE) show a composition bias toward low complexity. The tract at residues 310–519 (TFFSTMNTSF…VHGLESDEVV (210 aa)) is glycolipid transfer protein homology domain.

As to quaternary structure, homodimer. Interacts with ARF1; the interaction together with phosphatidylinositol 4-phosphate binding is required for FAPP2 GlcCer transfer ability.

The protein localises to the golgi apparatus. Its subcellular location is the trans-Golgi network membrane. It localises to the membrane. Functionally, cargo transport protein that is required for apical transport from the trans-Golgi network (TGN). Transports AQP2 from the trans-Golgi network (TGN) to sites of AQP2 phosphorylation. Mediates the non-vesicular transport of glucosylceramide (GlcCer) from the trans-Golgi network (TGN) to the plasma membrane and plays a pivotal role in the synthesis of complex glycosphingolipids. Binding of both phosphatidylinositol 4-phosphate (PIP) and ARF1 are essential for the GlcCer transfer ability. Also required for primary cilium formation, possibly by being involved in the transport of raft lipids to the apical membrane, and for membrane tubulation. The chain is Pleckstrin homology domain-containing family A member 8 (PLEKHA8) from Canis lupus familiaris (Dog).